Consider the following 355-residue polypeptide: Phosphoribosylformylglycinamidine cyclo-ligase (355 aa).

This sequence belongs to the AIR synthase family.

The protein resides in the cytoplasm. The catalysed reaction is 2-formamido-N(1)-(5-O-phospho-beta-D-ribosyl)acetamidine + ATP = 5-amino-1-(5-phospho-beta-D-ribosyl)imidazole + ADP + phosphate + H(+). It functions in the pathway purine metabolism; IMP biosynthesis via de novo pathway; 5-amino-1-(5-phospho-D-ribosyl)imidazole from N(2)-formyl-N(1)-(5-phospho-D-ribosyl)glycinamide: step 2/2. The protein is Phosphoribosylformylglycinamidine cyclo-ligase of Methylobacterium nodulans (strain LMG 21967 / CNCM I-2342 / ORS 2060).